We begin with the raw amino-acid sequence, 516 residues long: Maintenance of mitochondrial morphology protein 1 (516 aa).

At 1–43 the chain is on the lumenal side; that stretch reads MAGSTSASLQTPYFPSSTQINPVRVDHTLPLPPAQPSLSFTQG. Residues 44-64 form a helical membrane-spanning segment; that stretch reads LLVGQLSVVLLIGAFIKFFIF. The Cytoplasmic portion of the chain corresponds to 65–516; it reads GEAPPPPSRG…GSMPDTVTET (452 aa). Disordered regions lie at residues 70–118, 295–349, 420–466, and 485–516; these read PPSR…SSST, TSDQ…SKHG, RTGL…IDRG, and GGHQNQSGRDGGRGGNEQFAMPGSMPDTVTET. 3 stretches are compositionally biased toward polar residues: residues 74–96, 105–118, and 295–312; these read GLSNRTSTHPRSYSINAASTDSS, STSNILRPVPSSST, and TSDQTMSPIPTPHDTTSE. One can recognise an SMP-LTD domain in the interval 151 to 412; that stretch reads QPESLDWFNV…EPRVQVVGLP (262 aa). Over residues 449–460 the composition is skewed to gly residues; that stretch reads GVSGGGGGGGSM.

This sequence belongs to the MMM1 family. In terms of assembly, homodimer. Component of the ER-mitochondria encounter structure (ERMES) or MDM complex, composed of MMM1, MDM10, MDM12 and MDM34. An MMM1 homodimer associates with one molecule of MDM12 on each side in a pairwise head-to-tail manner, and the SMP-LTD domains of MMM1 and MDM12 generate a continuous hydrophobic tunnel for phospholipid trafficking.

The protein resides in the endoplasmic reticulum membrane. Component of the ERMES/MDM complex, which serves as a molecular tether to connect the endoplasmic reticulum (ER) and mitochondria. Components of this complex are involved in the control of mitochondrial shape and protein biogenesis, and function in nonvesicular lipid trafficking between the ER and mitochondria. The MDM12-MMM1 subcomplex functions in the major beta-barrel assembly pathway that is responsible for biogenesis of all outer membrane beta-barrel proteins, and acts in a late step after the SAM complex. The MDM10-MDM12-MMM1 subcomplex further acts in the TOM40-specific pathway after the action of the MDM12-MMM1 complex. Essential for establishing and maintaining the structure of mitochondria and maintenance of mtDNA nucleoids. The chain is Maintenance of mitochondrial morphology protein 1 from Paracoccidioides brasiliensis (strain Pb18).